The chain runs to 1737 residues: Complement C4 (1737 aa).

A signal peptide spans 1–19 (MRLLWGLAWAFSFFASSLQ). Cys-66 and Cys-95 are disulfide-bonded. N-linked (GlcNAc...) asparagine glycosylation is found at Asn-224 and Asn-664. Cys-633 and Cys-667 form a disulfide bridge. Residues 674-677 (RQKR) constitute a propeptide that is removed on maturation. Disulfide bonds link Cys-700–Cys-726, Cys-701–Cys-733, and Cys-714–Cys-734. An Anaphylatoxin-like domain is found at 700-734 (CCQDGMTKLPMARTCEQRAARVPQPACREPFLSCC). N-linked (GlcNAc...) asparagine glycosylation occurs at Asn-743. A cross-link (isoglutamyl cysteine thioester (Cys-Gln)) is located at residues 1005 to 1008 (CAEQ). Asn-1323 and Asn-1386 each carry an N-linked (GlcNAc...) asparagine glycan. 3 positions are modified to sulfotyrosine: Tyr-1412, Tyr-1414, and Tyr-1416. The propeptide occupies 1443–1446 (RRRR). Intrachain disulfides connect Cys-1464–Cys-1528, Cys-1576–Cys-1581, Cys-1588–Cys-1666, Cys-1611–Cys-1735, and Cys-1711–Cys-1720. Residues 1588–1735 (CPRQRRSLER…FLQEYSSQGC (148 aa)) enclose the NTR domain. At Tyr-1676 the chain carries Sulfotyrosine.

In terms of assembly, in absence of complement activation, circulates in blood as a disulfide-linked trimer of an alpha, beta and gamma chain. Complement C4b is composed of complement C4b-A, complement C4 beta and complement C4 gamma chains that are associated via disulfide bonds. Non-enzymatic component of the C3 convertase, also named C4bC2b, composed of the serine protease complement C2b (C2), as well as complement C4b. Non-enzymatic component of the C5 convertase, also named C4bC2bC3b, composed of the serine protease complement C2b (C2), complement C3b, as well as complement C4b. Post-translationally, prior to secretion, the single-chain precursor is enzymatically cleaved by plasminogen (PLG) to yield non-identical chains alpha, beta and gamma. During activation of the complement systems, the alpha chain is cleaved into C4a and C4b by different proteases depending on the complement pathway: C4b stays linked to the beta and gamma chains, while C4a is released in the plasma. The alpha chain is cleaved by C1S to generate C4a and C4b following activation by the classical complement system. The alpha chain is cleaved to generate C4a and C4b by MASP2 following activation by the lectin complement system. The alpha chain is cleaved by GZMK to generate C4a and C4b following activation by the GZMK complement system. Further degradation of C4b by C1 into the inactive fragments C4c and C4d blocks the generation of C3 convertase. The proteolytic cleavages often are incomplete so that many structural forms can be found in plasma. Upon activation, the internal thioester bond reacts with carbohydrate antigens on the target surface to form amide or ester bonds, leading to covalent association with the surface of pathogens. In terms of processing, complement C4b interacts with complement C3b via a thioester linkage. Post-translationally, N- and O-glycosylated. O-glycosylated with a core 1 or possibly core 8 glycan.

It is found in the secreted. The protein localises to the cell surface. Functionally, precursor of non-enzymatic components of the classical, lectin and GZMK complement pathways, which consist in a cascade of proteins that leads to phagocytosis and breakdown of pathogens and signaling that strengthens the adaptive immune system. Non-enzymatic component of C3 and C5 convertases. Generated following cleavage by complement proteases (C1S, MASP2 or GZMK, depending on the complement pathway), it covalently attaches to the surface of pathogens, where it acts as an opsonin that marks the surface of antigens for removal. It then recruits the serine protease complement C2b to form the C3 and C5 convertases, which cleave and activate C3 and C5, respectively, the next components of the complement pathways. Complement C4b-A isotype is responsible for effective binding to form amide bonds with immune aggregates or protein antigens, while complement C4b-B isotype catalyzes the transacylation of the thioester carbonyl group to form ester bonds with carbohydrate antigens. In terms of biological role, putative humoral mediator released following cleavage by complement proteases (C1S, MASP2 or GZMK, depending on the complement pathway). While it is strongly similar to anaphylatoxins, its role is unclear. Was reported to act as a mediator of local inflammatory process; however these effects were probably due to contamination with C3a and/C5a anaphylatoxins in biological assays. This chain is Complement C4, found in Rattus norvegicus (Rat).